Here is a 397-residue protein sequence, read N- to C-terminus: Elongation factor Tu (397 aa).

One can recognise a tr-type G domain in the interval 10 to 207; the sequence is LPHVNVGTIG…TLDSYIPDPV (198 aa). Residues 19–26 are G1; sequence GHVDHGKT. 19–26 lines the GTP pocket; that stretch reads GHVDHGKT. Mg(2+) is bound at residue threonine 26. Residues 60 to 64 are G2; that stretch reads GITIN. A G3 region spans residues 81 to 84; it reads DCPG. GTP is bound by residues 81 to 85 and 136 to 139; these read DCPGH and NKAD. The interval 136-139 is G4; sequence NKAD. Residues 174-176 are G5; the sequence is SAR.

The protein belongs to the TRAFAC class translation factor GTPase superfamily. Classic translation factor GTPase family. EF-Tu/EF-1A subfamily. Monomer.

Its subcellular location is the cytoplasm. The enzyme catalyses GTP + H2O = GDP + phosphate + H(+). GTP hydrolase that promotes the GTP-dependent binding of aminoacyl-tRNA to the A-site of ribosomes during protein biosynthesis. This is Elongation factor Tu from Pseudomonas fluorescens (strain SBW25).